The sequence spans 113 residues: uncharacterized protein (113 aa).

It to M.jannaschii MJ0886 C-terminal region.

This is an uncharacterized protein from Clostridium pasteurianum.